Here is a 202-residue protein sequence, read N- to C-terminus: Urease accessory protein UreE (202 aa).

The tract at residues 138 to 202 (RGAYHSHGGH…HGHHHGHKHD (65 aa)) is disordered. Positions 147 to 193 (HSHDHGHAAHDHGHAAHDHGHNHDHDHGHAHGHDHQHDHNCDHDHDH) are enriched in basic and acidic residues.

Belongs to the UreE family.

The protein localises to the cytoplasm. In terms of biological role, involved in urease metallocenter assembly. Binds nickel. Probably functions as a nickel donor during metallocenter assembly. This Rhizobium etli (strain CIAT 652) protein is Urease accessory protein UreE.